We begin with the raw amino-acid sequence, 63 residues long: Synergistic-type venom protein C9S3, chain 1 (63 aa).

3 disulfide bridges follow: Cys3–Cys24, Cys17–Cys42, and Cys46–Cys57.

The protein belongs to the three-finger toxin family. Short-chain subfamily. Aminergic toxin sub-subfamily. As to quaternary structure, heterodimer of C9S3 chain 1 and chain 2 (AC P01409); disulfide-linked. In terms of tissue distribution, expressed by the venom gland.

The protein resides in the secreted. In terms of biological role, this protein shows a synergetic toxic effect in that it enhances the toxicity of other toxins. The chain is Synergistic-type venom protein C9S3, chain 1 from Dendroaspis angusticeps (Eastern green mamba).